Consider the following 623-residue polypeptide: Stretch-activated cation channel MID1 (623 aa).

Topologically, residues Met1–Asp57 are extracellular. A helical membrane pass occupies residues Leu58–Val78. At Ala79–Gly623 the chain is on the cytoplasmic side. Low complexity predominate over residues Thr524–Thr536. The segment at Thr524–Pro544 is disordered. Residues Ser600–Gly623 form a required for targeting to the cell membrane region.

As to quaternary structure, forms an oligomer by disulfide bonds. Interacts with CCH1 to form a Ca(2+) influx channel. Interacts (via C-terminus) with CCP1/cytochrome c peroxidase; the interaction may contribute to cellular detoxification of radicals.

The protein localises to the cell membrane. Its function is as follows. Calcium-permeable, cation-selective stretch-activated channel (SAC) that functions together with CCH1 to mediate calcium entry into cells. May additionally play a role in cellular detoxification of radicals. The protein is Stretch-activated cation channel MID1 of Cryptococcus neoformans var. grubii serotype A (strain H99 / ATCC 208821 / CBS 10515 / FGSC 9487) (Filobasidiella neoformans var. grubii).